A 228-amino-acid polypeptide reads, in one-letter code: Claudin-10 (228 aa).

The helical transmembrane segment at 1-21 (MASTASEIIAFMVSISGWVLV) threads the bilayer. The Extracellular segment spans residues 22–80 (SSTLPTDYWKVSTIDGTVITTATYWANLWKACVTDSTGVSNCKDFPSMLALDGYIQACR). The chain crosses the membrane as a helical span at residues 81 to 101 (GLMIAAVSLGFFGSIFALFGM). At 102–115 (KCTKVGGSDKAKAK) the chain is on the cytoplasmic side. A helical membrane pass occupies residues 116–136 (IACLAGIVFILSGLCSMTGCS). At 137 to 160 (LYANKITTEFFDPLFVEQKYELGA) the chain is on the extracellular side. Residues 161-181 (ALFIGWAGASLCIIGGVIFCF) form a helical membrane-spanning segment. Over 182–228 (SISDNNKTPRYTYNGATSVMSSRTKYHGGEDFKTTNPSKQFDKNAYV) the chain is Cytoplasmic.

Belongs to the claudin family. In terms of assembly, can form homodimers both in trans (interaction between CLDN10 molecules in opposing membranes) and in cis (interaction between CLDN10 molecules within one membrane). Interacts with CLDN19. In terms of tissue distribution, expressed in the kidney, eccrine sweat glands and in all layers of the epidermis. In the kidney, it is detected in the thick ascending limb of Henle's loop (TAL). In the sweat glands, it is expressed in cells from secretory portions, corresponding to the clear cells.

It is found in the cell junction. It localises to the tight junction. The protein resides in the cell membrane. The catalysed reaction is Na(+)(in) = Na(+)(out). It carries out the reaction Li(+)(in) = Li(+)(out). The enzyme catalyses K(+)(in) = K(+)(out). It catalyses the reaction Rb(+)(in) = Rb(+)(out). The catalysed reaction is Cs(+)(in) = Cs(+)(out). It carries out the reaction NH4(+)(in) = NH4(+)(out). The enzyme catalyses methylamine(out) = methylamine(in). It catalyses the reaction Mg(2+)(in) = Mg(2+)(out). The catalysed reaction is Ca(2+)(in) = Ca(2+)(out). It carries out the reaction Sr(2+)(in) = Sr(2+)(out). The enzyme catalyses chloride(in) = chloride(out). It catalyses the reaction nitrate(in) = nitrate(out). In terms of biological role, forms paracellular channels: polymerizes in tight junction strands with cation- and anion-selective channels through the strands, conveying epithelial permeability in a process known as paracellular tight junction permeability. Forms cation-selective paracellular channels. In sweat glands and in the thick ascending limb (TAL) of Henle's loop in kidney, it controls paracellular sodium permeability which is essential for proper sweat production and renal function. Its function is as follows. Forms anion-selective paracellular channels. In renal proximal tubules, it conveys selective chloride over hydrogencarbonate anion permeability which is required for renal chloride reabsorption and salt homeostasis. This Homo sapiens (Human) protein is Claudin-10.